The sequence spans 208 residues: Large ribosomal subunit protein uL3 (208 aa).

The interval Gly-116–Ala-148 is disordered.

Belongs to the universal ribosomal protein uL3 family. As to quaternary structure, part of the 50S ribosomal subunit. Forms a cluster with proteins L14 and L19.

Its function is as follows. One of the primary rRNA binding proteins, it binds directly near the 3'-end of the 23S rRNA, where it nucleates assembly of the 50S subunit. The polypeptide is Large ribosomal subunit protein uL3 (Streptococcus pyogenes serotype M12 (strain MGAS2096)).